Reading from the N-terminus, the 132-residue chain is Small ribosomal subunit protein uS11 (132 aa).

Belongs to the universal ribosomal protein uS11 family. As to quaternary structure, part of the 30S ribosomal subunit. Interacts with proteins S7 and S18. Binds to IF-3.

In terms of biological role, located on the platform of the 30S subunit, it bridges several disparate RNA helices of the 16S rRNA. Forms part of the Shine-Dalgarno cleft in the 70S ribosome. This chain is Small ribosomal subunit protein uS11, found in Chlamydia abortus (strain DSM 27085 / S26/3) (Chlamydophila abortus).